A 325-amino-acid polypeptide reads, in one-letter code: Lipoyl synthase (325 aa).

The tract at residues 1 to 31 is disordered; it reads MASDSDLLDTKPAETRHPEKAHRPDQPTLRK. A compositionally biased stretch (basic and acidic residues) spans 8 to 31; sequence LDTKPAETRHPEKAHRPDQPTLRK. [4Fe-4S] cluster contacts are provided by Cys61, Cys66, Cys72, Cys87, Cys91, Cys94, and Ser300. Residues 73-289 enclose the Radical SAM core domain; it reads WAKKHATFMI…AEIGRAKGFL (217 aa).

Belongs to the radical SAM superfamily. Lipoyl synthase family. [4Fe-4S] cluster serves as cofactor.

It localises to the cytoplasm. The enzyme catalyses [[Fe-S] cluster scaffold protein carrying a second [4Fe-4S](2+) cluster] + N(6)-octanoyl-L-lysyl-[protein] + 2 oxidized [2Fe-2S]-[ferredoxin] + 2 S-adenosyl-L-methionine + 4 H(+) = [[Fe-S] cluster scaffold protein] + N(6)-[(R)-dihydrolipoyl]-L-lysyl-[protein] + 4 Fe(3+) + 2 hydrogen sulfide + 2 5'-deoxyadenosine + 2 L-methionine + 2 reduced [2Fe-2S]-[ferredoxin]. It functions in the pathway protein modification; protein lipoylation via endogenous pathway; protein N(6)-(lipoyl)lysine from octanoyl-[acyl-carrier-protein]: step 2/2. Functionally, catalyzes the radical-mediated insertion of two sulfur atoms into the C-6 and C-8 positions of the octanoyl moiety bound to the lipoyl domains of lipoate-dependent enzymes, thereby converting the octanoylated domains into lipoylated derivatives. This Methylocella silvestris (strain DSM 15510 / CIP 108128 / LMG 27833 / NCIMB 13906 / BL2) protein is Lipoyl synthase.